Here is a 565-residue protein sequence, read N- to C-terminus: Potassium-transporting ATPase potassium-binding subunit (565 aa).

Transmembrane regions (helical) follow at residues 6–26 (LMLL…LGSL), 63–83 (LLAI…LLMA), 132–152 (GLGV…FALI), 175–195 (LYVL…QGVI), 250–270 (LSNL…CFAF), 283–303 (LLWT…YAEL), 327–347 (FGIL…CGAV), 354–374 (FTAL…VVFG), 379–399 (GLYG…LMIG), 418–438 (ALAI…ALLC), 483–503 (LLLA…VMAI), and 524–544 (GALF…LTFI).

It belongs to the KdpA family. As to quaternary structure, the system is composed of three essential subunits: KdpA, KdpB and KdpC.

It localises to the cell inner membrane. Part of the high-affinity ATP-driven potassium transport (or Kdp) system, which catalyzes the hydrolysis of ATP coupled with the electrogenic transport of potassium into the cytoplasm. This subunit binds the periplasmic potassium ions and delivers the ions to the membrane domain of KdpB through an intramembrane tunnel. The sequence is that of Potassium-transporting ATPase potassium-binding subunit from Edwardsiella ictaluri (strain 93-146).